Consider the following 275-residue polypeptide: Large ribosomal subunit protein uL2c (275 aa).

Disordered stretches follow at residues 29 to 60 and 225 to 252; these read PEKSLTYGRHRSQGRNNRGIITSRHRGGGHKR and MNPVDHPHGGGEGRAPIGRSKPVTPWGH. Residues 51–60 are compositionally biased toward basic residues; the sequence is SRHRGGGHKR.

It belongs to the universal ribosomal protein uL2 family. As to quaternary structure, part of the 50S ribosomal subunit.

Its subcellular location is the plastid. It localises to the chloroplast. This chain is Large ribosomal subunit protein uL2c (rpl2), found in Chlorokybus atmophyticus (Soil alga).